The chain runs to 378 residues: Acid phosphatase-like protein XcAP-2 (378 aa).

Positions M1 to A19 are cleaved as a signal peptide. Disulfide bonds link C147-C374, C168-C220, and C347-C351.

The protein belongs to the histidine acid phosphatase family.

It is found in the secreted. In terms of biological role, probably modulates blood feeding of fleas on vertebrate species by binding and sequestering different mediators involved in the host response. Binds histamine. Binds leukotriene B4, leukotriene C4, leukotriene D4 and leukotriene E4. Does not bind serotonin, adrenaline, noradrenaline, ADP, and stable analogs of thromboxane A2: U-46619 and cTXA2. In Xenopsylla cheopis (Oriental rat flea), this protein is Acid phosphatase-like protein XcAP-2.